The following is a 171-amino-acid chain: Shikimate kinase (171 aa).

14–19 serves as a coordination point for ATP; that stretch reads GAGKST. A Mg(2+)-binding site is contributed by S18. Substrate-binding residues include D36, R60, and G82. R120 is an ATP binding site. R139 lines the substrate pocket. Residue Q156 coordinates ATP.

Belongs to the shikimate kinase family. In terms of assembly, monomer. The cofactor is Mg(2+).

The protein localises to the cytoplasm. It carries out the reaction shikimate + ATP = 3-phosphoshikimate + ADP + H(+). It functions in the pathway metabolic intermediate biosynthesis; chorismate biosynthesis; chorismate from D-erythrose 4-phosphate and phosphoenolpyruvate: step 5/7. Catalyzes the specific phosphorylation of the 3-hydroxyl group of shikimic acid using ATP as a cosubstrate. The chain is Shikimate kinase from Shewanella woodyi (strain ATCC 51908 / MS32).